We begin with the raw amino-acid sequence, 165 residues long: MRTGVYPGTFDPITLGHMDIIRRGAKLVDKLVIGVTTNASKSPMFTVEERLAMVRRETADLPGVEVVAFDSLLMDFAESMGAAIIVRGLRAVADFEYEYQMAGMNQQLNNRVETVFLMADVALQPIASRLVKEIALYGGAIDRFVPKRVVQEVVARVEKIGKKGS.

Substrate is bound at residue threonine 9. ATP is bound by residues 9–10 and histidine 17; that span reads TF. 3 residues coordinate substrate: lysine 41, leucine 73, and arginine 87. Residues 88–90, glutamate 98, and 123–129 contribute to the ATP site; these read GLR and LQPIASR.

It belongs to the bacterial CoaD family. In terms of assembly, homohexamer. The cofactor is Mg(2+).

Its subcellular location is the cytoplasm. The catalysed reaction is (R)-4'-phosphopantetheine + ATP + H(+) = 3'-dephospho-CoA + diphosphate. The protein operates within cofactor biosynthesis; coenzyme A biosynthesis; CoA from (R)-pantothenate: step 4/5. In terms of biological role, reversibly transfers an adenylyl group from ATP to 4'-phosphopantetheine, yielding dephospho-CoA (dPCoA) and pyrophosphate. This Rhizorhabdus wittichii (strain DSM 6014 / CCUG 31198 / JCM 15750 / NBRC 105917 / EY 4224 / RW1) (Sphingomonas wittichii) protein is Phosphopantetheine adenylyltransferase.